The chain runs to 181 residues: Inner membrane-spanning protein YciB (181 aa).

5 helical membrane passes run 10 to 30 (LVIFFAVYKFFDIYIASGALI), 50 to 70 (MHLITFAMVTVFGTLTLVFHD), 80 to 100 (IIYSLFAIALGVSQLLNKSIL), 118 to 138 (VTWYWVVFFASCGLVNIYVAF), and 148 to 168 (FKVFGLTALTLINTVLTVFYL).

Belongs to the YciB family.

Its subcellular location is the cell inner membrane. In terms of biological role, plays a role in cell envelope biogenesis, maintenance of cell envelope integrity and membrane homeostasis. The protein is Inner membrane-spanning protein YciB of Shewanella baltica (strain OS223).